Here is a 169-residue protein sequence, read N- to C-terminus: Positive control factor (169 aa).

Positions 132 to 157 form a DNA-binding region, H-T-H motif; sequence YERIADLLGVKKSTVQTTIKRASLKM.

Its function is as follows. Positive regulatory protein that acts at the late promoter PL. The protein is Positive control factor (xpf) of Bacillus subtilis (strain 168).